Reading from the N-terminus, the 105-residue chain is Large ribosomal subunit protein eL30 (105 aa).

Belongs to the eukaryotic ribosomal protein eL30 family.

This chain is Large ribosomal subunit protein eL30 (RPL30), found in Candida glabrata (strain ATCC 2001 / BCRC 20586 / JCM 3761 / NBRC 0622 / NRRL Y-65 / CBS 138) (Yeast).